The sequence spans 525 residues: Peptide chain release factor 3 (525 aa).

A tr-type G domain is found at 9–276 (AKRRTFAIIS…GFTRYAPAPQ (268 aa)). Residues 18 to 25 (SHPDAGKT), 86 to 90 (DTPGH), and 140 to 143 (NKFD) contribute to the GTP site.

Belongs to the TRAFAC class translation factor GTPase superfamily. Classic translation factor GTPase family. PrfC subfamily.

It is found in the cytoplasm. Increases the formation of ribosomal termination complexes and stimulates activities of RF-1 and RF-2. It binds guanine nucleotides and has strong preference for UGA stop codons. It may interact directly with the ribosome. The stimulation of RF-1 and RF-2 is significantly reduced by GTP and GDP, but not by GMP. In Francisella tularensis subsp. tularensis (strain FSC 198), this protein is Peptide chain release factor 3.